The sequence spans 418 residues: MFSPKIIILSTGSELTSGRSQDTNSSWIANELFGIGFTVSKLVVLPDDPEAILEELRTLVSLATKKNPVLLIMTGGLGPTEDDYTLEVVCKLKGVSSVESVVARQRIEAFYKLRGKNFQESLQTAIRQISVPKDSTILNNEVGIAPGFIVSLGENVHLGCMPGVPGEMTEMFREEFSTWILKKYSTRELHSGFRFIWWMSESQFQKEFISKEESVTSGKVIWGVAAKRGYIRVSFQSNERALVDFLLKKLDEIYGPKSTLDVFEELPKLLIEKKITVGTAESCTGGLISKIFTDKPGSSTYFYGGVISYDNGVKEGILGVKKNTLKEFGAVSMETAKEMAEGALVALGVDYSISVTGIAGPGGGTPQKKVGLVYFGIGQKNEKTETHEHYFPFPRSSFREFAAHTGIYLLYNRLKRLA.

It belongs to the CinA family.

The sequence is that of CinA-like protein from Leptospira interrogans serogroup Icterohaemorrhagiae serovar copenhageni (strain Fiocruz L1-130).